The primary structure comprises 1938 residues: MSSDQEMAVFGEAAPYLRKSEKERIEAQNKPFDAKTSVFVADPKESFVKATVQSREGGKVTAKTEAGATVTVKEDQVFPMNPPKFDKIEDMAMMTHLHEPAVLYNLKERYAAWMIYTYSGLFCVTVNPYKWLPVYNAEVVTAYRGKKRQEAPPHIFSISDNAYQFMLTDRENQSILITGESGAGKTVNTKRVIQYFATIAVTGEKKKEEPTSGKMQGTLEDQIISANPLLEAFGNAKTVRNDNSSRFGKFIRIHFGTTGKLASADIETYLLEKSRVTFQLKAERSYHIFYQIMSNKKPELIEMLLITTNPYDYAYVSQGEITVPSIDDQEELMATDSAIEILGFTSDERVSIYKLTGAVMHYGNLKFKQKQREEQAEPDGTEVADKAAYLQGLNSADLLKALCYPRVKVGNEFVTKGQTVEQVYNAVGALAKAVYDKMFLWMVARINQQLDTKQPRQYFIGVLDIAGFEIFDFNSLEQLCINFTNEKLQQFFNHHMFVLEQEEYKKEGIEWEFIDFGMDLAACIELIEKPMGIFSILEEECMFPKATDMSFKNKLYEQHLGKSNNFQKPKPAKGKAEAHFSLIHYAGTVDYNITGWLDKNKDPLNETVVGLYQKSSVKTLALLFSGPASGEAEGGPKKGGKKKGSSFQTVSALFRENLNKLMTNLRSTHPHFVRCIIPNETKTPGAMEHELVLHQLRCNGVLEGIRICRKGFPSRILYADFKQRYKVLNASAIPEGQFIDSKKASEKLLASIDVDHTQYKFGHTKVFFKAGLLGLLEEMRDEKLAQLITRTQARCRGFLARVEYQKMVERRESIFCIQYNVRAFMNVKHWPWMKLYFKIKPLLKSAETEKEMANMKEEFEKTKEELAKSEAKRKELEEKMVTLTQEKNDLQLQVQSEADALADAEERCDQLIKTKIQLEAKIKEVTERAEDEEEINAELTAKKRKLEDECSELKKDIDDLELTLAKVEKEKHATENKVKNLTEEMAGLDETIAKLTKEKKALQEAHQQTLDDLQAEEDKVNTLTKAKTKLEQQVDDLEGSLEQEKKLRMDLERAKRKLEGDLKLAQESTMDIENDKQQLDEKLKKKEFEMSNLQSKIEDEQALAMQLQKKIKELQARIEELEEEIEAERASRAKAEKQRSDLSRELEEISERLEEAGGATSAQIEMNKKREAEFQKMRRDLEEATLQHEATAAALRKKHADSVAELGEQIDNLQRVKQKLEKEKSEMKMEIDDLASNMETVSKAKGNLEKMCRALEDQLSELKTKEDEQQRLINDLTTQRARLQTESGEFSRQLDEKDALVSQLSRGKQAFTQQIEELKRQLEEEIKAKSALAHALQSARHDCDLLREQYEEEQEGKAELQRAMSKANSEVAQWRTKYETDAIQRTEELEEAKKKLAQRLQDAEEHVEAVNAKCASLEKTKQRLQNEVEDLMIDVERTNAACAALDKKQRNFDKILSEWKQKYEETHAELEASQKESRSLSTELFKIKNAYEESLDQLETLKRENKNLQQEISDLTEQIAEGGKRIHELEKVKKQVEQEKSEIQAALEEAEASLEHEEGKILRIQLELNQVKSEIDRKIAEKDEEIDQLKRNHIRIVESMQSTLDAEIRSRNDAIRLKKKMEGDLNEMEIQLNHANRMAAEALKNYRSTQAILKDTQIHLDDALRGQEDLKEQLAMVERRANLLQAEIEELRATLEQTERSRKIAEQELLDASERVQLLHTQNTSLINTKKKLETDITQIQGEMEDIIQEARNAEEKAKKAITDAAMMAEELKKEQDTSAHLERMKKNLEQTVKDLQHRLDEAEQLALKGGKKQIQKLEARVRELEGEVESEQKRNVEAVKGLRKHERRVKELTYQTEEDRKNILRLQDLVDKLQAKVKSYKRQAEEAEEQSNVNLSKFRKLQHELEEAEERADIAESQVNKLRVKSREVHTKIISEE.

Positions 33–82 (DAKTSVFVADPKESFVKATVQSREGGKVTAKTEAGATVTVKEDQVFPMNP) constitute a Myosin N-terminal SH3-like domain. Thr-64 and Thr-69 each carry phosphothreonine. Residues 86–781 (DKIEDMAMMT…LLGLLEEMRD (696 aa)) form the Myosin motor domain. At Lys-130 the chain carries N6,N6,N6-trimethyllysine. An ATP-binding site is contributed by 179 to 186 (GESGAGKT). Phosphotyrosine is present on Tyr-389. At Thr-419 the chain carries Phosphothreonine. Position 424 is a phosphotyrosine (Tyr-424). Position 625 is a phosphoserine (Ser-625). Positions 658-680 (LNKLMTNLRSTHPHFVRCIIPNE) are actin-binding. Residue His-756 is modified to Pros-methylhistidine. Residues 760-774 (KFGHTKVFFKAGLLG) form an actin-binding region. The IQ domain occupies 784-813 (LAQLITRTQARCRGFLARVEYQKMVERRES). Positions 842 to 1938 (LLKSAETEKE…EVHTKIISEE (1097 aa)) form a coiled coil. Phosphoserine occurs at positions 1091 and 1095. 2 disordered regions span residues 1124–1146 (EIEAERASRAKAEKQRSDLSREL) and 1152–1171 (RLEEAGGATSAQIEMNKKRE). The span at 1127–1146 (AERASRAKAEKQRSDLSREL) shows a compositional bias: basic and acidic residues. Phosphoserine occurs at positions 1161 and 1236. Thr-1240 is subject to Phosphothreonine. A phosphoserine mark is found at Ser-1242 and Ser-1260. A phosphothreonine mark is found at Thr-1264 and Thr-1285. Phosphoserine is present on residues Ser-1287, Ser-1291, Ser-1302, and Ser-1305. Position 1463 is a phosphotyrosine (Tyr-1463). At Thr-1466 the chain carries Phosphothreonine. A Phosphoserine modification is found at Ser-1473. A Phosphotyrosine modification is found at Tyr-1491. At Ser-1494 the chain carries Phosphoserine. Thr-1500 carries the post-translational modification Phosphothreonine. A Phosphoserine modification is found at Ser-1513. Residue Thr-1516 is modified to Phosphothreonine. Ser-1541, Ser-1553, Ser-1573, Ser-1599, Ser-1602, Ser-1713, and Ser-1725 each carry phosphoserine. Phosphothreonine is present on residues Thr-1729 and Thr-1735.

The protein belongs to the TRAFAC class myosin-kinesin ATPase superfamily. Myosin family. In terms of assembly, muscle myosin is a hexameric protein that consists of 2 heavy chain subunits (MHC), 2 alkali light chain subunits (MLC) and 2 regulatory light chain subunits (MLC-2). Interacts with SLC26A5.

It is found in the cytoplasm. Its subcellular location is the myofibril. Required for normal hearing. It plays a role in cochlear amplification of auditory stimuli, likely through the positive regulation of prestin (SLC26A5) activity and outer hair cell (OHC) electromotility. The chain is Myosin-1 (MYH1) from Bos taurus (Bovine).